Here is a 327-residue protein sequence, read N- to C-terminus: Aspartate--ammonia ligase (327 aa).

The protein belongs to the class-II aminoacyl-tRNA synthetase family. AsnA subfamily.

It localises to the cytoplasm. The enzyme catalyses L-aspartate + NH4(+) + ATP = L-asparagine + AMP + diphosphate + H(+). It participates in amino-acid biosynthesis; L-asparagine biosynthesis; L-asparagine from L-aspartate (ammonia route): step 1/1. This is Aspartate--ammonia ligase from Bacillus mycoides (strain KBAB4) (Bacillus weihenstephanensis).